The primary structure comprises 523 residues: Putative UDP-glucuronosyltransferase ugt-50 (523 aa).

Positions 1 to 25 (MHYSQMRWMFFCLTALLHGSFIVNA) are cleaved as a signal peptide. N-linked (GlcNAc...) asparagine glycosylation is found at asparagine 84, asparagine 248, asparagine 283, and asparagine 487. Residues 490-508 (IIEHNHLDLFFYLCIISLL) form a helical membrane-spanning segment.

Belongs to the UDP-glycosyltransferase family.

It localises to the membrane. The enzyme catalyses glucuronate acceptor + UDP-alpha-D-glucuronate = acceptor beta-D-glucuronoside + UDP + H(+). The protein is Putative UDP-glucuronosyltransferase ugt-50 (ugt-50) of Caenorhabditis elegans.